We begin with the raw amino-acid sequence, 127 residues long: Fluoride-specific ion channel FluC (127 aa).

Transmembrane regions (helical) follow at residues 3–23 (ALLL…LLGV), 36–56 (GTFA…GGLA), 72–92 (VGAL…ALMI), and 101–121 (FAYS…GLLL). 2 residues coordinate Na(+): Gly-76 and Thr-79.

The protein belongs to the fluoride channel Fluc/FEX (TC 1.A.43) family.

Its subcellular location is the cell inner membrane. The catalysed reaction is fluoride(in) = fluoride(out). Na(+) is not transported, but it plays an essential structural role and its presence is essential for fluoride channel function. Fluoride-specific ion channel. Important for reducing fluoride concentration in the cell, thus reducing its toxicity. This chain is Fluoride-specific ion channel FluC, found in Phenylobacterium zucineum (strain HLK1).